A 229-amino-acid chain; its full sequence is MSKKAVVLLSGGLDSATVLAIARHQGYDVYCLSLDYQQRHRAELQAADRVTKALGAVMHRTVKLDLSVFGGSALTDASIAVPEVPSEGIPVTYVPARNTIMLSLALAWAEVLEARDIFIGVNALDYSGYPDCRGEYVHAFQAMANLATKSAVEGRTIAIHAPLIDMTKADIVTQGTSLGVDYSLTVSCYQADDEGRACGVCDSCRLRRQGFVAAGLADPTRYAPTAGIR.

9 to 19 (LSGGLDSATVL) lines the ATP pocket. Zn(2+) is bound by residues C188, C198, C201, and C204.

It belongs to the QueC family. It depends on Zn(2+) as a cofactor.

It carries out the reaction 7-carboxy-7-deazaguanine + NH4(+) + ATP = 7-cyano-7-deazaguanine + ADP + phosphate + H2O + H(+). It functions in the pathway purine metabolism; 7-cyano-7-deazaguanine biosynthesis. Catalyzes the ATP-dependent conversion of 7-carboxy-7-deazaguanine (CDG) to 7-cyano-7-deazaguanine (preQ(0)). This chain is 7-cyano-7-deazaguanine synthase, found in Methylobacillus flagellatus (strain ATCC 51484 / DSM 6875 / VKM B-1610 / KT).